Consider the following 204-residue polypeptide: Holliday junction branch migration complex subunit RuvA (204 aa).

Residues 1 to 67 (MIAFLSGHLV…ETELVLYGFG (67 aa)) are domain I. The tract at residues 68-146 (SPAERDVFVE…HWRQGLENAD (79 aa)) is domain II. The segment at 147-156 (RPLAGGPPPA) is flexible linker. Residues 156–204 (AIREEVEMALLALGYSLQEIQAALQALPSQPRPTEEWLRDAITYLSRQP) form a domain III region.

The protein belongs to the RuvA family. As to quaternary structure, homotetramer. Forms an RuvA(8)-RuvB(12)-Holliday junction (HJ) complex. HJ DNA is sandwiched between 2 RuvA tetramers; dsDNA enters through RuvA and exits via RuvB. An RuvB hexamer assembles on each DNA strand where it exits the tetramer. Each RuvB hexamer is contacted by two RuvA subunits (via domain III) on 2 adjacent RuvB subunits; this complex drives branch migration. In the full resolvosome a probable DNA-RuvA(4)-RuvB(12)-RuvC(2) complex forms which resolves the HJ.

Its subcellular location is the cytoplasm. Functionally, the RuvA-RuvB-RuvC complex processes Holliday junction (HJ) DNA during genetic recombination and DNA repair, while the RuvA-RuvB complex plays an important role in the rescue of blocked DNA replication forks via replication fork reversal (RFR). RuvA specifically binds to HJ cruciform DNA, conferring on it an open structure. The RuvB hexamer acts as an ATP-dependent pump, pulling dsDNA into and through the RuvAB complex. HJ branch migration allows RuvC to scan DNA until it finds its consensus sequence, where it cleaves and resolves the cruciform DNA. The chain is Holliday junction branch migration complex subunit RuvA from Synechococcus sp. (strain JA-3-3Ab) (Cyanobacteria bacterium Yellowstone A-Prime).